Consider the following 390-residue polypeptide: F-box/kelch-repeat protein At3g04660 (390 aa).

Residues 18-67 form the F-box domain; that stretch reads YDPSSILPLELKIEILMKSPPKSIAKLGFVSNHWSSIIRGQVFTDLYMRR. 2 Kelch repeats span residues 115-161 and 272-323; these read FSPP…FGYD and MVDH…DQRV.

In terms of assembly, part of a SCF (ASK-cullin-F-box) protein ligase complex. Interacts with SKP1A/ASK1, SKP1B/ASK2, ASK11 and ASK13.

It localises to the nucleus. Its pathway is protein modification; protein ubiquitination. In terms of biological role, component of SCF(ASK-cullin-F-box) E3 ubiquitin ligase complexes, which may mediate the ubiquitination and subsequent proteasomal degradation of target proteins. This chain is F-box/kelch-repeat protein At3g04660, found in Arabidopsis thaliana (Mouse-ear cress).